The primary structure comprises 810 residues: RING finger protein unkempt homolog (810 aa).

The tract at residues 1-24 (MSKGPGPGGSAASSAPPAATAQVL) is disordered. Residues 10-19 (SAASSAPPAA) are compositionally biased toward low complexity. C3H1-type zinc fingers lie at residues 84–113 (YSPD…HRTT), 124–154 (YYKT…HGPH), 215–241 (NYKT…HNSK), 251–285 (KYRS…HTRT), and 293–321 (IYKS…HIEP). The interval 239–265 (NSKDRRRSPRKHKYRSSPCPNVKHGDE) is disordered. At Ser-240 the chain carries Phosphoserine. A compositionally biased stretch (basic residues) spans 241–253 (KDRRRSPRKHKYR). 4 positions are modified to phosphoserine: Ser-374, Ser-378, Ser-385, and Ser-394. The segment at 478–497 (TSSLAATPPSPAGTNSTPGM) is disordered. At Ser-631 the chain carries Phosphoserine. Residues 643 to 727 (GAAELARLRQ…ERLHTVPEAQ (85 aa)) adopt a coiled-coil conformation. An RING-type; degenerate zinc finger spans residues 766–801 (SVKCLKCQEQTRAVLPCQHAVLCELCAEGSECPVCQ).

Belongs to the unkempt family.

Its subcellular location is the cytoplasm. Sequence-specific RNA-binding protein which plays an important role in the establishment and maintenance of the early morphology of cortical neurons during embryonic development. Acts as a translation repressor and controls a translationally regulated cell morphology program to ensure proper structuring of the nervous system. Translational control depends on recognition of its binding element within target mRNAs which consists of a mandatory UAG trimer upstream of a U/A-rich motif. Associated with polysomes. This Mus musculus (Mouse) protein is RING finger protein unkempt homolog (Unk).